The sequence spans 183 residues: uncharacterized protein (183 aa).

In terms of domain architecture, SIS spans 27–170 (MIKLIDSARS…VAEIMMQKHL (144 aa)).

It belongs to the SIS family. PHI subfamily.

This is an uncharacterized protein from Archaeoglobus fulgidus (strain ATCC 49558 / DSM 4304 / JCM 9628 / NBRC 100126 / VC-16).